Here is a 238-residue protein sequence, read N- to C-terminus: Ribosomal RNA small subunit methyltransferase G (238 aa).

Residues G77, F82, 128-129 (AE), and R147 each bind S-adenosyl-L-methionine.

It belongs to the methyltransferase superfamily. RNA methyltransferase RsmG family.

The protein resides in the cytoplasm. In terms of biological role, specifically methylates the N7 position of guanine in position 535 of 16S rRNA. The polypeptide is Ribosomal RNA small subunit methyltransferase G (Geobacillus sp. (strain WCH70)).